Consider the following 336-residue polypeptide: Holliday junction branch migration complex subunit RuvB (336 aa).

A large ATPase domain (RuvB-L) region spans residues 4 to 184; that stretch reads ADRIISAIAK…FGIVQRLEFY (181 aa). ATP-binding positions include I23, R24, G65, K68, T69, T70, 131 to 133, R174, Y184, and R221; that span reads EDY. T69 contacts Mg(2+). The small ATPAse domain (RuvB-S) stretch occupies residues 185–255; that stretch reads SIEDLTSIVM…IAKAALAMLD (71 aa). The interval 258-336 is head domain (RuvB-H); it reads QAGFDYLDRK…HFGLAKLADK (79 aa). The DNA site is built by R294, R313, and R318.

The protein belongs to the RuvB family. Homohexamer. Forms an RuvA(8)-RuvB(12)-Holliday junction (HJ) complex. HJ DNA is sandwiched between 2 RuvA tetramers; dsDNA enters through RuvA and exits via RuvB. An RuvB hexamer assembles on each DNA strand where it exits the tetramer. Each RuvB hexamer is contacted by two RuvA subunits (via domain III) on 2 adjacent RuvB subunits; this complex drives branch migration. In the full resolvosome a probable DNA-RuvA(4)-RuvB(12)-RuvC(2) complex forms which resolves the HJ.

The protein resides in the cytoplasm. It carries out the reaction ATP + H2O = ADP + phosphate + H(+). In terms of biological role, the RuvA-RuvB-RuvC complex processes Holliday junction (HJ) DNA during genetic recombination and DNA repair, while the RuvA-RuvB complex plays an important role in the rescue of blocked DNA replication forks via replication fork reversal (RFR). RuvA specifically binds to HJ cruciform DNA, conferring on it an open structure. The RuvB hexamer acts as an ATP-dependent pump, pulling dsDNA into and through the RuvAB complex. RuvB forms 2 homohexamers on either side of HJ DNA bound by 1 or 2 RuvA tetramers; 4 subunits per hexamer contact DNA at a time. Coordinated motions by a converter formed by DNA-disengaged RuvB subunits stimulates ATP hydrolysis and nucleotide exchange. Immobilization of the converter enables RuvB to convert the ATP-contained energy into a lever motion, pulling 2 nucleotides of DNA out of the RuvA tetramer per ATP hydrolyzed, thus driving DNA branch migration. The RuvB motors rotate together with the DNA substrate, which together with the progressing nucleotide cycle form the mechanistic basis for DNA recombination by continuous HJ branch migration. Branch migration allows RuvC to scan DNA until it finds its consensus sequence, where it cleaves and resolves cruciform DNA. The sequence is that of Holliday junction branch migration complex subunit RuvB from Actinobacillus succinogenes (strain ATCC 55618 / DSM 22257 / CCUG 43843 / 130Z).